We begin with the raw amino-acid sequence, 73 residues long: Protein SlyX homolog (73 aa).

It belongs to the SlyX family.

This is Protein SlyX homolog from Haemophilus influenzae (strain PittEE).